Reading from the N-terminus, the 297-residue chain is N-acetylmuramic acid 6-phosphate etherase (297 aa).

Positions 56–219 (AIEAFNKGGR…STISMIGIGK (164 aa)) constitute an SIS domain. Catalysis depends on Glu84, which acts as the Proton donor. The active site involves Glu115.

The protein belongs to the GCKR-like family. MurNAc-6-P etherase subfamily. As to quaternary structure, homodimer.

It catalyses the reaction N-acetyl-D-muramate 6-phosphate + H2O = N-acetyl-D-glucosamine 6-phosphate + (R)-lactate. The protein operates within amino-sugar metabolism; N-acetylmuramate degradation. Functionally, specifically catalyzes the cleavage of the D-lactyl ether substituent of MurNAc 6-phosphate, producing GlcNAc 6-phosphate and D-lactate. The polypeptide is N-acetylmuramic acid 6-phosphate etherase (Lactococcus lactis subsp. cremoris (strain SK11)).